Consider the following 225-residue polypeptide: Small ribosomal subunit protein uS2 (225 aa).

It belongs to the universal ribosomal protein uS2 family.

This is Small ribosomal subunit protein uS2 from Metallosphaera sedula (strain ATCC 51363 / DSM 5348 / JCM 9185 / NBRC 15509 / TH2).